The chain runs to 95 residues: Ragulator complex protein LAMTOR4 homolog (95 aa).

This sequence belongs to the LAMTOR4 family. Part of the Ragulator complex.

It is found in the lysosome. In terms of biological role, regulator of the TOR pathway, a signaling cascade that promotes cell growth in response to growth factors, energy levels, and amino acids. As part of the Ragulator complex, may activate the TOR signaling cascade in response to amino acids. This Nematostella vectensis (Starlet sea anemone) protein is Ragulator complex protein LAMTOR4 homolog.